The primary structure comprises 639 residues: Envelope glycoprotein (639 aa).

The first 34 residues, 1–34 (MESPTHPKPSKDKTFPWNLVFLVGILFQIDMGMA), serve as a signal peptide directing secretion. Over 35–583 (NPSPHQVYNV…FNKSPWFTTL (549 aa)) the chain is Extracellular. N-linked (GlcNAc...) asparagine; by host glycans are attached at residues asparagine 43 and asparagine 58. Cystine bridges form between cysteine 122-cysteine 144 and cysteine 136-cysteine 149. The tract at residues 232–278 (QAMGPNLVLPDQKPPSRQSQTKSKVTTQRPQITSSTPRSVASATMGP) is disordered. Residues 246-273 (PSRQSQTKSKVTTQRPQITSSTPRSVAS) show a composition bias toward polar residues. N-linked (GlcNAc...) asparagine; by host glycosylation is found at asparagine 299 and asparagine 304. Cystine bridges form between cysteine 309/cysteine 312, cysteine 309/cysteine 536, and cysteine 528/cysteine 535. The short motif at 309–312 (CWLC) is the CXXC element. 4 N-linked (GlcNAc...) asparagine; by host glycosylation sites follow: asparagine 328, asparagine 331, asparagine 387, and asparagine 407. The segment at 445 to 465 (ISLTVALMLGGLTVGGIAAGV) is fusion peptide. Coiled coils occupy residues 473–522 (LETA…ILFL) and 532–568 (KEECCFYADHTGLVRDNMAKLRERLKQRQQLFDSQQG). The immunosuppression stretch occupies residues 511 to 527 (LQNRRGLDILFLQEGGL). The CX6CC motif lies at 528–536 (CAALKEECC). Residues 584-604 (ISSIMGPLLILLLILLLGPCI) form a helical membrane-spanning segment. The S-palmitoyl cysteine; by host moiety is linked to residue cysteine 603. Over 605 to 639 (LNRLVQFVKDRISVVQALILTQQYQQIQQYDSDRP) the chain is Cytoplasmic.

As to quaternary structure, the mature envelope protein (Env) consists of a trimer of SU-TM heterodimers attached by a labile interchain disulfide bond. Specific enzymatic cleavages in vivo yield mature proteins. Envelope glycoproteins are synthesized as an inactive precursor that is N-glycosylated and processed likely by host cell furin or by a furin-like protease in the Golgi to yield the mature SU and TM proteins. The cleavage site between SU and TM requires the minimal sequence [KR]-X-[KR]-R. The R-peptide is released from the C-terminus of the cytoplasmic tail of the TM protein upon particle formation as a result of proteolytic cleavage by the viral protease. Cleavage of this peptide is required for TM to become fusogenic. In terms of processing, the CXXC motif is highly conserved across a broad range of retroviral envelope proteins. It is thought to participate in the formation of a labile disulfide bond possibly with the CX6CC motif present in the transmembrane protein. Isomerization of the intersubunit disulfide bond to an SU intrachain disulfide bond is thought to occur upon receptor recognition in order to allow membrane fusion. Post-translationally, the transmembrane protein is palmitoylated. The R-peptide is palmitoylated.

Its subcellular location is the virion membrane. The protein localises to the host cell membrane. Its function is as follows. The surface protein (SU) attaches the virus to the host cell by binding to its receptor. This interaction triggers the refolding of the transmembrane protein (TM) and is thought to activate its fusogenic potential by unmasking its fusion peptide. Fusion occurs at the host cell plasma membrane. The transmembrane protein (TM) acts as a class I viral fusion protein. Under the current model, the protein has at least 3 conformational states: pre-fusion native state, pre-hairpin intermediate state, and post-fusion hairpin state. During viral and target cell membrane fusion, the coiled coil regions (heptad repeats) assume a trimer-of-hairpins structure, positioning the fusion peptide in close proximity to the C-terminal region of the ectodomain. The formation of this structure appears to drive apposition and subsequent fusion of viral and target cell membranes. Membranes fusion leads to delivery of the nucleocapsid into the cytoplasm. The sequence is that of Envelope glycoprotein (env) from Feline leukemia virus (strain C/Sarma).